The following is a 95-amino-acid chain: Protein Vpr (95 aa).

The interval 1 to 42 (MERAPEDAGPQREPYNEWALELLEELKNEAVRHFPRIWLHGL) is homooligomerization. 3 positions are modified to phosphoserine; by host: Ser-79, Ser-93, and Ser-95.

Belongs to the HIV-1 VPR protein family. As to quaternary structure, homooligomer, may form homodimer. Interacts with p6-gag region of the Pr55 Gag precursor protein through a (Leu-X-X)4 motif near the C-terminus of the P6gag protein. Interacts with host UNG. May interact with host RAD23A/HHR23A. Interacts with host VPRBP/DCAF1, leading to hijack the CUL4A-RBX1-DDB1-DCAF1/VPRBP complex, mediating ubiquitination of host proteins such as TERT and ZGPAT and arrest of the cell cycle in G2 phase. Phosphorylated on several residues by host. These phosphorylations regulate VPR activity for the nuclear import of the HIV-1 pre-integration complex.

The protein localises to the virion. The protein resides in the host nucleus. It localises to the host extracellular space. Its function is as follows. During virus replication, may deplete host UNG protein, and incude G2-M cell cycle arrest. Acts by targeting specific host proteins for degradation by the 26S proteasome, through association with the cellular CUL4A-DDB1 E3 ligase complex by direct interaction with host VPRPB/DCAF-1. Cell cycle arrest reportedly occurs within hours of infection and is not blocked by antiviral agents, suggesting that it is initiated by the VPR carried into the virion. Additionally, VPR induces apoptosis in a cell cycle dependent manner suggesting that these two effects are mechanistically linked. Detected in the serum and cerebrospinal fluid of AIDS patient, VPR may also induce cell death to bystander cells. In terms of biological role, during virus entry, plays a role in the transport of the viral pre-integration (PIC) complex to the host nucleus. This function is crucial for viral infection of non-dividing macrophages. May act directly at the nuclear pore complex, by binding nucleoporins phenylalanine-glycine (FG)-repeat regions. The chain is Protein Vpr from Human immunodeficiency virus type 1 group N (isolate YBF30) (HIV-1).